Reading from the N-terminus, the 97-residue chain is NELL2-interacting cell ontogeny regulator 1 (97 aa).

Residues 1–35 form the signal peptide; sequence MAPLPPCGPPRSPPPRLLLLLLLLSATLLGAPARA.

This sequence belongs to the NICOL family. In terms of assembly, interacts with NELL2; triggers epididymal differentiation. Interacts with cell surface receptor TFRC; the interaction mediates uptake of NICOL1 into fibroblasts.

Its subcellular location is the secreted. It is found in the cytoplasm. It localises to the perinuclear region. In terms of biological role, mRNA-binding protein which interacts with a range of target mRNAs including SERPINE1, ACTA2, CCN2 and COL4A1 and may promote extracellular matrix production. Binds to the 3'-UTR of SERPINE1 mRNA and stabilizes the mRNA, possibly by competing for binding with SERBP1 and preventing SERBP1-mediated mRNA degradation. Also binds to the 3'-UTR of ACTA2. Testis-derived lumicrine factor that triggers epididymal differentiation and sperm maturation. The polypeptide is NELL2-interacting cell ontogeny regulator 1 (Bos taurus (Bovine)).